The following is a 393-amino-acid chain: S-adenosylmethionine synthase 2 (393 aa).

Glu-9 contributes to the Mg(2+) binding site. Position 15 (His-15) interacts with ATP. Glu-43 is a binding site for K(+). L-methionine-binding residues include Glu-56 and Gln-99. ATP is bound by residues 167–169 (DGK), 235–238 (SGRF), Asp-246, 252–253 (RK), Ala-269, Lys-273, and Lys-277. Residue Asp-246 coordinates L-methionine. Lys-277 lines the L-methionine pocket.

The protein belongs to the AdoMet synthase family. Homotetramer. Interacts with GRF3. Requires Mn(2+) as cofactor. Mg(2+) is required as a cofactor. The cofactor is Co(2+). It depends on K(+) as a cofactor. As to expression, highly expressed in stems and roots. Detected in trichomes (at the protein level).

It localises to the cytoplasm. The enzyme catalyses L-methionine + ATP + H2O = S-adenosyl-L-methionine + phosphate + diphosphate. Its pathway is amino-acid biosynthesis; S-adenosyl-L-methionine biosynthesis; S-adenosyl-L-methionine from L-methionine: step 1/1. Inhibited by 5,5'-dithiobis-2-nitrobenzoic acid (DTNB) and N-ethylmaleimide (NEM) (in vitro). In terms of biological role, catalyzes the formation of S-adenosylmethionine from methionine and ATP. The reaction comprises two steps that are both catalyzed by the same enzyme: formation of S-adenosylmethionine (AdoMet) and triphosphate, and subsequent hydrolysis of the triphosphate. This Arabidopsis thaliana (Mouse-ear cress) protein is S-adenosylmethionine synthase 2 (SAM2).